An 836-amino-acid chain; its full sequence is Ethylene receptor 3 (836 aa).

3 helical membrane passes run 137 to 157 (LIAAAYFSIPLEILYFVAGLR), 166 to 186 (LVQFGAFIVLCGLTHLLTAFT), and 204 to 224 (LTALVSFLTAITLLTLIPQLL). Residues cysteine 176 and histidine 180 each contribute to the Cu cation site. Positions 269–413 (DRHTVLYTTL…VVAGQVAVAL (145 aa)) constitute a GAF domain. Positions 416-452 (ATLLEESRAMRDRLAEQNRELLQARRDALMANEARQA) form a coiled coil. A Histidine kinase domain is found at 457–691 (MSQGMRRPIH…LVLRFQLQSP (235 aa)). Residues 718 to 834 (LLIDDDDDIN…LKDELARILQ (117 aa)) enclose the Response regulatory domain.

It belongs to the ethylene receptor family. Cu cation serves as cofactor.

It localises to the endoplasmic reticulum membrane. The catalysed reaction is ATP + protein L-histidine = ADP + protein N-phospho-L-histidine.. In terms of biological role, ethylene receptor related to bacterial two-component regulators. Acts as a negative regulator of ethylene signaling. May delay the transition from the vegetative stage to the floral stage by up-regulating GI (GIGANTEA) and RCN1 and cause starch accumulation in stems by down-regulating the alpha-amylase AMY3D. In Oryza sativa subsp. japonica (Rice), this protein is Ethylene receptor 3 (ETR3).